Consider the following 120-residue polypeptide: Large ribosomal subunit protein bL20 (120 aa).

Belongs to the bacterial ribosomal protein bL20 family.

In terms of biological role, binds directly to 23S ribosomal RNA and is necessary for the in vitro assembly process of the 50S ribosomal subunit. It is not involved in the protein synthesizing functions of that subunit. The sequence is that of Large ribosomal subunit protein bL20 from Mesoplasma florum (strain ATCC 33453 / NBRC 100688 / NCTC 11704 / L1) (Acholeplasma florum).